The chain runs to 143 residues: Nucleoside diphosphate kinase (143 aa).

The ATP site is built by K11, F59, R87, T93, R104, and N114. Catalysis depends on H117, which acts as the Pros-phosphohistidine intermediate.

Belongs to the NDK family. In terms of assembly, homotetramer. It depends on Mg(2+) as a cofactor.

The protein resides in the cytoplasm. It carries out the reaction a 2'-deoxyribonucleoside 5'-diphosphate + ATP = a 2'-deoxyribonucleoside 5'-triphosphate + ADP. The catalysed reaction is a ribonucleoside 5'-diphosphate + ATP = a ribonucleoside 5'-triphosphate + ADP. Major role in the synthesis of nucleoside triphosphates other than ATP. The ATP gamma phosphate is transferred to the NDP beta phosphate via a ping-pong mechanism, using a phosphorylated active-site intermediate. This chain is Nucleoside diphosphate kinase, found in Clostridium perfringens (strain SM101 / Type A).